Consider the following 265-residue polypeptide: Orotidine 5'-phosphate decarboxylase (265 aa).

Substrate-binding positions include Asp-38, 60–62, 91–100, Tyr-213, and Arg-232; these read KTH and DRKFADIGNT. The active-site Proton donor is the Lys-93.

This sequence belongs to the OMP decarboxylase family.

It carries out the reaction orotidine 5'-phosphate + H(+) = UMP + CO2. The protein operates within pyrimidine metabolism; UMP biosynthesis via de novo pathway; UMP from orotate: step 2/2. The chain is Orotidine 5'-phosphate decarboxylase (pyrG) from Mucor circinelloides f. lusitanicus (Mucor racemosus var. lusitanicus).